Reading from the N-terminus, the 373-residue chain is Transcription factor NF-E2 45 kDa subunit (373 aa).

Disordered stretches follow at residues 1-22 (MPPC…GELG) and 40-60 (LNVP…PGPL). The interval 1–83 (MPPCPPQPNR…AGFTLPPPPY (83 aa)) is required for interaction with MAPK8. A transactivation domain region spans residues 1–206 (MPPCPPQPNR…PPTETPLVLE (206 aa)). 2 consecutive short sequence motifs (PXY motif) follow at residues 61 to 65 (PPPTY) and 79 to 83 (PPPPY). The interval 131-163 (LPVGQPKPQEDPESDSGLSLNYSDAESLELEGT) is disordered. S157 carries the phosphoserine; by MAPK8 modification. A Phosphoserine; by PKA modification is found at S170. Positions 206–225 (ESSSGPVRAKPAVRGEAGSR) are disordered. In terms of domain architecture, bZIP spans 266–329 (LVRDIRRRGK…EVMRQQLTEL (64 aa)). A basic motif region spans residues 268 to 287 (RDIRRRGKNKVAAQNCRKRK). Residues 291-298 (IVQLEREL) form a leucine-zipper region. K368 participates in a covalent cross-link: Glycyl lysine isopeptide (Lys-Gly) (interchain with G-Cter in SUMO); alternate. K368 participates in a covalent cross-link: Glycyl lysine isopeptide (Lys-Gly) (interchain with G-Cter in SUMO1); alternate.

It belongs to the bZIP family. CNC subfamily. As to quaternary structure, homodimer; can bind DNA as a homodimer. Erythroid transcription activator nuclear factor erythroid-derived 2 (NF-E2), composed of a heterodimer of NFE2 and MAFK, possesses transactivation activity on beta-globin. Also forms high affinity heterodimer with MAFG; the interaction promotes erythropoiesis. Interacts (via the PXY motif 1) with ITCH (via the WW 1 domain); the interaction promotes 'Lys63'-linked ubiquitination of NFE2, translocates it to the cytoplasm and inhibits its transactivation activity. Interacts with KMT2D/MLL2; the interaction promotes transactivation of the beta-globin locus. Interacts with MAPK8 (phosphorylated form); the interaction leads to phosphorylation of NFE2 in undifferentiated cells. In terms of processing, phosphorylated on serine residues. In undifferentiated erythrocytes, phosphorylated by MAPK8 which then leads to ubiquitination and protein degradation. Sumoylated. Sumoylation is required for translocation to nuclear bodies PODs, anchoring to the gene loci, and transactivation of the beta-globin gene. Post-translationally, ubiquitinated mainly by 'Lys63'-linked ubiquitin. Polyubiquitination with 'Lys63'-linked ubiquitin by ITCH retains NFE2 in the cytoplasm preventing its transactivation activity. In undifferentiated erythrocyte, ubiquitinated after MAPK8-mediatd phosphorylation leading to protein degradation.

The protein resides in the nucleus. The protein localises to the PML body. It is found in the cytoplasm. Component of the NF-E2 complex essential for regulating erythroid and megakaryocytic maturation and differentiation. Binds to the hypersensitive site 2 (HS2) of the beta-globin control region (LCR). This subunit (NFE2) recognizes the TCAT/C sequence of the AP-1-like core palindrome present in a number of erythroid and megakaryocytic gene promoters. Requires MAFK or other small MAF proteins for binding to the NF-E2 motif. May play a role in all aspects of hemoglobin production from globin and heme synthesis to procurement of iron. The sequence is that of Transcription factor NF-E2 45 kDa subunit (Nfe2) from Rattus norvegicus (Rat).